A 336-amino-acid polypeptide reads, in one-letter code: Ferredoxin--NADP reductase (336 aa).

FAD is bound by residues Glu-34, Gln-42, Tyr-47, Val-87, Phe-121, Asp-286, and Ser-326.

The protein belongs to the ferredoxin--NADP reductase type 2 family. As to quaternary structure, homodimer. FAD is required as a cofactor.

It catalyses the reaction 2 reduced [2Fe-2S]-[ferredoxin] + NADP(+) + H(+) = 2 oxidized [2Fe-2S]-[ferredoxin] + NADPH. This Leuconostoc mesenteroides subsp. mesenteroides (strain ATCC 8293 / DSM 20343 / BCRC 11652 / CCM 1803 / JCM 6124 / NCDO 523 / NBRC 100496 / NCIMB 8023 / NCTC 12954 / NRRL B-1118 / 37Y) protein is Ferredoxin--NADP reductase.